A 360-amino-acid polypeptide reads, in one-letter code: Glycerol-1-phosphate dehydrogenase [NAD(P)+] (360 aa).

Residues 108 to 112 (GRVID) and 130 to 133 (TAAS) contribute to the NAD(+) site. Aspartate 135 provides a ligand contact to substrate. Serine 139 contributes to the NAD(+) binding site. Aspartate 182 serves as a coordination point for substrate. Zn(2+)-binding residues include aspartate 182 and histidine 262. Histidine 266 contacts substrate. Residue histidine 278 participates in Zn(2+) binding.

This sequence belongs to the glycerol-1-phosphate dehydrogenase family. The cofactor is Zn(2+).

The protein resides in the cytoplasm. It catalyses the reaction sn-glycerol 1-phosphate + NAD(+) = dihydroxyacetone phosphate + NADH + H(+). The catalysed reaction is sn-glycerol 1-phosphate + NADP(+) = dihydroxyacetone phosphate + NADPH + H(+). The protein operates within membrane lipid metabolism; glycerophospholipid metabolism. Its function is as follows. Catalyzes the NAD(P)H-dependent reduction of dihydroxyacetonephosphate (DHAP or glycerone phosphate) to glycerol 1-phosphate (G1P). The G1P thus generated is used as the glycerophosphate backbone of phospholipids in the cellular membranes of Archaea. The polypeptide is Glycerol-1-phosphate dehydrogenase [NAD(P)+] (Methanocorpusculum labreanum (strain ATCC 43576 / DSM 4855 / Z)).